Here is a 231-residue protein sequence, read N- to C-terminus: Small ribosomal subunit protein uS3 (231 aa).

The 70-residue stretch at 17–86 (VEKYLTKELK…SPQIEVQQVQ (70 aa)) folds into the KH type-2 domain.

The protein belongs to the universal ribosomal protein uS3 family. Part of the 30S ribosomal subunit.

Binds the lower part of the 30S subunit head. This chain is Small ribosomal subunit protein uS3, found in Methanoregula boonei (strain DSM 21154 / JCM 14090 / 6A8).